Here is a 173-residue protein sequence, read N- to C-terminus: Photosystem I assembly protein Ycf3 (173 aa).

3 TPR repeats span residues alanine 35–proline 68, glycine 72–glutamine 105, and glycine 120–glycine 153.

This sequence belongs to the Ycf3 family.

It is found in the cellular thylakoid membrane. In terms of biological role, essential for the assembly of the photosystem I (PSI) complex. May act as a chaperone-like factor to guide the assembly of the PSI subunits. The protein is Photosystem I assembly protein Ycf3 of Parasynechococcus marenigrum (strain WH8102).